Here is a 341-residue protein sequence, read N- to C-terminus: Trans-3-hydroxy-L-proline dehydratase (341 aa).

Catalysis depends on Ser90, which acts as the Proton acceptor. Substrate-binding positions include 91 to 92, Asp252, and 257 to 258; these read GS and GT.

Belongs to the proline racemase family.

The catalysed reaction is trans-3-hydroxy-L-proline = 1-pyrroline-2-carboxylate + H2O. Catalyzes the dehydration of trans-3-hydroxy-L-proline (t3LHyp) to Delta(1)-pyrroline-2-carboxylate (Pyr2C). May be involved in a degradation pathway of t3LHyp, which would allow L.aggregata to grow on t3LHyp as a sole carbon source. Displays neither proline racemase activity nor 4-hydroxyproline 2-epimerase activity. The polypeptide is Trans-3-hydroxy-L-proline dehydratase (Roseibium aggregatum (strain ATCC 25650 / DSM 13394 / JCM 20685 / NBRC 16684 / NCIMB 2208 / IAM 12614 / B1) (Stappia aggregata)).